We begin with the raw amino-acid sequence, 372 residues long: MDKLRVLYDEFVTISKDNLERETGLSASDVDMDFDLNIFMTLVPVLEKKVCVITPTIEDDKIVTMMKYCSYQSFSFWFLKSGAVVKSVYNKLDDAEKEKFVATFKDMLLNVQTLISLNSMYTRLRQDTEDIVSDSKKIMEIVSHLRASTTENAAYQVLQQNNSFIISTLNKILSDENYLLKIIAVFDSKLISEKETLNEYKQLYTISSESLVYGIRCVSNLDISSVQLSNNKYVLFVKKMLPKIILFQNNDINAQQFANVISKIYTLIYRQLTSNVDVGCLLTDTIESTKTKISVEKFKQTGINNVQSLIKFISDNKKEYKTIISEEYLSKEDRIITILQNIVNEHDIKYDNNLLNMRDLIVTFRERYSYKF.

It belongs to the orthopoxvirus OPG132 family.

It localises to the host cytoplasm. The protein resides in the virion. Its function is as follows. Lipid-bound viral membrane assembly protein that plays an essential role in immature virion (IV) to mature virion (MV) transition. Functions in both crescent-shaped viral membranes formation and its enclosure to form immature virions. In addition, participates in targeting mature virion proteins to sites of virion assembly to ensure their correct localization. This chain is Virion morphogenesis protein OPG132 (OPG132), found in Homo sapiens (Human).